Reading from the N-terminus, the 142-residue chain is Cytochrome c-type biogenesis protein CcmE (142 aa).

Residues 1–2 lie on the Cytoplasmic side of the membrane; it reads MK. A helical; Signal-anchor for type II membrane protein transmembrane segment spans residues 3-23; sequence GKYLLGILVILGALGYMVFGG. The Periplasmic portion of the chain corresponds to 24–142; that stretch reads LGRNLVYFLT…EVRKLIEEAQ (119 aa). Residues H118 and Y122 each contribute to the heme site.

The protein belongs to the CcmE/CycJ family.

Its subcellular location is the cell inner membrane. Functionally, heme chaperone required for the biogenesis of c-type cytochromes. Transiently binds heme delivered by CcmC and transfers the heme to apo-cytochromes in a process facilitated by CcmF and CcmH. The polypeptide is Cytochrome c-type biogenesis protein CcmE (Thermus thermophilus (strain ATCC BAA-163 / DSM 7039 / HB27)).